A 276-amino-acid polypeptide reads, in one-letter code: Adenylate kinase (276 aa).

51–56 provides a ligand contact to ATP; that stretch reads GAGKGT. The interval 71–100 is NMP; the sequence is ATGDMLRSQVAKKTPLGQAAKKIMDAGGLV. Residues threonine 72, arginine 77, 98–100, 127–130, and glutamine 134 each bind AMP; these read GLV and GFPR. Residues 168–205 are LID; the sequence is GRLVHPASGRSYHVKFNPPKKEMTDDITGEPLIQRSDD. ATP is bound by residues arginine 169 and 178–179; that span reads SY. The AMP site is built by arginine 202 and arginine 213. Glutamine 241 is an ATP binding site.

Belongs to the adenylate kinase family. AK2 subfamily. As to quaternary structure, monomer.

The protein localises to the cytoplasm. Its subcellular location is the cytosol. It localises to the mitochondrion intermembrane space. The enzyme catalyses AMP + ATP = 2 ADP. Functionally, catalyzes the reversible transfer of the terminal phosphate group between ATP and AMP. Plays an important role in cellular energy homeostasis and in adenine nucleotide metabolism. Adenylate kinase activity is critical for regulation of the phosphate utilization and the AMP de novo biosynthesis pathways. This is Adenylate kinase from Podospora anserina (strain S / ATCC MYA-4624 / DSM 980 / FGSC 10383) (Pleurage anserina).